Here is an 89-residue protein sequence, read N- to C-terminus: Class I hydrophobin C (89 aa).

The N-terminal stretch at 1–16 (MKFSLATIALAAAVAA) is a signal peptide. Disulfide bonds link cysteine 28–cysteine 68, cysteine 39–cysteine 60, cysteine 40–cysteine 52, and cysteine 69–cysteine 85. A glycan (N-linked (GlcNAc...) asparagine) is linked at asparagine 36.

The protein belongs to the fungal hydrophobin family.

The protein resides in the secreted. It localises to the cell wall. Its subcellular location is the vacuole. It is found in the cytoplasmic vesicle. Its function is as follows. Aerial growth, conidiation, and dispersal of filamentous fungi in the environment rely upon a capability of their secreting small amphipathic proteins called hydrophobins (HPBs) with low sequence identity. Class I can self-assemble into an outermost layer of rodlet bundles on aerial cell surfaces, conferring cellular hydrophobicity that supports fungal growth, development and dispersal; whereas Class II form highly ordered films at water-air interfaces through intermolecular interactions but contribute nothing to the rodlet structure. Hyd1C contributes to certain cell wall-related features, such as hydrophobicity but is not involved in cell wall-related events during fungal proliferation in host hemocoel. Does not contribute to conidial hydrophobicity. The sequence is that of Class I hydrophobin C from Beauveria bassiana (strain ARSEF 2860) (White muscardine disease fungus).